A 109-amino-acid chain; its full sequence is Iron-sulfur cluster assembly protein CyaY (109 aa).

The protein belongs to the frataxin family.

Its function is as follows. Involved in iron-sulfur (Fe-S) cluster assembly. May act as a regulator of Fe-S biogenesis. The polypeptide is Iron-sulfur cluster assembly protein CyaY (Shewanella sp. (strain ANA-3)).